Here is a 115-residue protein sequence, read N- to C-terminus: T cell receptor beta variable 11-1 (115 aa).

The N-terminal stretch at methionine 1–alanine 21 is a signal peptide. The 94-residue stretch at glutamate 22–leucine 115 folds into the Ig-like domain. A disulfide bridge links cysteine 42 with cysteine 111.

In terms of assembly, alpha-beta TR is a heterodimer composed of an alpha and beta chain; disulfide-linked. The alpha-beta TR is associated with the transmembrane signaling CD3 coreceptor proteins to form the TR-CD3 (TcR or TCR). The assembly of alpha-beta TR heterodimers with CD3 occurs in the endoplasmic reticulum where a single alpha-beta TR heterodimer associates with one CD3D-CD3E heterodimer, one CD3G-CD3E heterodimer and one CD247 homodimer forming a stable octameric structure. CD3D-CD3E and CD3G-CD3E heterodimers preferentially associate with TR alpha and TR beta chains, respectively. The association of the CD247 homodimer is the last step of TcR assembly in the endoplasmic reticulum and is required for transport to the cell surface.

The protein localises to the cell membrane. V region of the variable domain of T cell receptor (TR) beta chain that participates in the antigen recognition. Alpha-beta T cell receptors are antigen specific receptors which are essential to the immune response and are present on the cell surface of T lymphocytes. Recognize peptide-major histocompatibility (MH) (pMH) complexes that are displayed by antigen presenting cells (APC), a prerequisite for efficient T cell adaptive immunity against pathogens. Binding of alpha-beta TR to pMH complex initiates TR-CD3 clustering on the cell surface and intracellular activation of LCK that phosphorylates the ITAM motifs of CD3G, CD3D, CD3E and CD247 enabling the recruitment of ZAP70. In turn ZAP70 phosphorylates LAT, which recruits numerous signaling molecules to form the LAT signalosome. The LAT signalosome propagates signal branching to three major signaling pathways, the calcium, the mitogen-activated protein kinase (MAPK) kinase and the nuclear factor NF-kappa-B (NF-kB) pathways, leading to the mobilization of transcription factors that are critical for gene expression and essential for T cell growth and differentiation. The T cell repertoire is generated in the thymus, by V-(D)-J rearrangement. This repertoire is then shaped by intrathymic selection events to generate a peripheral T cell pool of self-MH restricted, non-autoaggressive T cells. Post-thymic interaction of alpha-beta TR with the pMH complexes shapes TR structural and functional avidity. In Homo sapiens (Human), this protein is T cell receptor beta variable 11-1.